Consider the following 112-residue polypeptide: Large ribosomal subunit protein uL22 (112 aa).

The protein belongs to the universal ribosomal protein uL22 family. In terms of assembly, part of the 50S ribosomal subunit.

In terms of biological role, this protein binds specifically to 23S rRNA; its binding is stimulated by other ribosomal proteins, e.g. L4, L17, and L20. It is important during the early stages of 50S assembly. It makes multiple contacts with different domains of the 23S rRNA in the assembled 50S subunit and ribosome. The globular domain of the protein is located near the polypeptide exit tunnel on the outside of the subunit, while an extended beta-hairpin is found that lines the wall of the exit tunnel in the center of the 70S ribosome. This chain is Large ribosomal subunit protein uL22, found in Finegoldia magna (strain ATCC 29328 / DSM 20472 / WAL 2508) (Peptostreptococcus magnus).